The sequence spans 88 residues: Small ribosomal subunit protein uS17 (88 aa).

This sequence belongs to the universal ribosomal protein uS17 family. In terms of assembly, part of the 30S ribosomal subunit.

One of the primary rRNA binding proteins, it binds specifically to the 5'-end of 16S ribosomal RNA. The polypeptide is Small ribosomal subunit protein uS17 (Hahella chejuensis (strain KCTC 2396)).